The primary structure comprises 341 residues: Phosphate acyltransferase (341 aa).

It belongs to the PlsX family. As to quaternary structure, homodimer. Probably interacts with PlsY.

It is found in the cytoplasm. It carries out the reaction a fatty acyl-[ACP] + phosphate = an acyl phosphate + holo-[ACP]. It participates in lipid metabolism; phospholipid metabolism. In terms of biological role, catalyzes the reversible formation of acyl-phosphate (acyl-PO(4)) from acyl-[acyl-carrier-protein] (acyl-ACP). This enzyme utilizes acyl-ACP as fatty acyl donor, but not acyl-CoA. This chain is Phosphate acyltransferase, found in Nostoc sp. (strain PCC 7120 / SAG 25.82 / UTEX 2576).